A 192-amino-acid chain; its full sequence is Thymidine kinase (192 aa).

ATP contacts are provided by residues 9–16 (GAMNSGKS) and 85–88 (DEVQ). Catalysis depends on E86, which acts as the Proton acceptor. Positions 143, 146, 181, and 184 each coordinate Zn(2+).

It belongs to the thymidine kinase family. In terms of assembly, homotetramer.

It localises to the cytoplasm. It carries out the reaction thymidine + ATP = dTMP + ADP + H(+). In Shouchella clausii (strain KSM-K16) (Alkalihalobacillus clausii), this protein is Thymidine kinase.